Here is a 297-residue protein sequence, read N- to C-terminus: Esterase LipU (297 aa).

Catalysis depends on residues Ser-140, Glu-239, and His-269.

Belongs to the 'GDXG' lipolytic enzyme family.

It localises to the secreted. The catalysed reaction is a fatty acid ester + H2O = an aliphatic alcohol + a fatty acid + H(+). It catalyses the reaction a butanoate ester + H2O = an aliphatic alcohol + butanoate + H(+). The enzyme catalyses an acetyl ester + H2O = an aliphatic alcohol + acetate + H(+). It carries out the reaction decanoate ester + H2O = decanoate + an aliphatic alcohol + H(+). The catalysed reaction is an octanoate ester + H2O = an aliphatic alcohol + octanoate + H(+). It catalyses the reaction a dodecanoate ester + H2O = an aliphatic alcohol + dodecanoate + H(+). The enzyme catalyses hexadecanoate ester + H2O = an aliphatic alcohol + hexadecanoate + H(+). Inhibited by the ionic detergent SDS and by the serine protease inhibitor PMSF. Inhibited by the FDA approved drugs Diosmin, Acarbose and Ouabain. These drugs remain bound in the active site pocket and could be probable drug candidates to combat TB disease. Its function is as follows. Esterase that shows preference for short chain fatty acids. Contributes to the growth of M.tuberculosis during the nutritive stress. Elicits strong humoral response in both extrapulmonary and relapsed cases of tuberculosis patients. The chain is Esterase LipU from Mycobacterium tuberculosis (strain ATCC 25618 / H37Rv).